The chain runs to 160 residues: Transcription elongation factor GreA (160 aa).

Residues 3 to 84 (NIVDDKILLT…SKAKIIKADL (82 aa)) adopt a coiled-coil conformation.

Belongs to the GreA/GreB family.

Necessary for efficient RNA polymerase transcription elongation past template-encoded arresting sites. The arresting sites in DNA have the property of trapping a certain fraction of elongating RNA polymerases that pass through, resulting in locked ternary complexes. Cleavage of the nascent transcript by cleavage factors such as GreA or GreB allows the resumption of elongation from the new 3'terminus. GreA releases sequences of 2 to 3 nucleotides. The sequence is that of Transcription elongation factor GreA from Mesomycoplasma hyopneumoniae (strain J / ATCC 25934 / NCTC 10110) (Mycoplasma hyopneumoniae).